We begin with the raw amino-acid sequence, 215 residues long: Urease accessory protein UreG (215 aa).

Residue 11 to 18 participates in GTP binding; that stretch reads GPVGAGKS.

This sequence belongs to the SIMIBI class G3E GTPase family. UreG subfamily. As to quaternary structure, homodimer. UreD, UreF and UreG form a complex that acts as a GTP-hydrolysis-dependent molecular chaperone, activating the urease apoprotein by helping to assemble the nickel containing metallocenter of UreC. The UreE protein probably delivers the nickel.

The protein resides in the cytoplasm. Its function is as follows. Facilitates the functional incorporation of the urease nickel metallocenter. This process requires GTP hydrolysis, probably effectuated by UreG. In Cenarchaeum symbiosum (strain A), this protein is Urease accessory protein UreG.